Consider the following 334-residue polypeptide: Protein-glutamate methylesterase/protein-glutamine glutaminase 2 (334 aa).

The region spanning 2–120 (NIGIVNDLPL…GAAGDTTKLL (119 aa)) is the Response regulatory domain. The residue at position 53 (D53) is a 4-aspartylphosphate. In terms of domain architecture, CheB-type methylesterase spans 134 to 334 (PGSSRLAGAA…AGELAALARI (201 aa)). Catalysis depends on residues S157, H184, and D277.

This sequence belongs to the CheB family. In terms of processing, phosphorylated by CheA. Phosphorylation of the N-terminal regulatory domain activates the methylesterase activity.

Its subcellular location is the cytoplasm. The catalysed reaction is [protein]-L-glutamate 5-O-methyl ester + H2O = L-glutamyl-[protein] + methanol + H(+). It carries out the reaction L-glutaminyl-[protein] + H2O = L-glutamyl-[protein] + NH4(+). Functionally, involved in chemotaxis. Part of a chemotaxis signal transduction system that modulates chemotaxis in response to various stimuli. Catalyzes the demethylation of specific methylglutamate residues introduced into the chemoreceptors (methyl-accepting chemotaxis proteins or MCP) by CheR. Also mediates the irreversible deamidation of specific glutamine residues to glutamic acid. The protein is Protein-glutamate methylesterase/protein-glutamine glutaminase 2 of Burkholderia orbicola (strain AU 1054).